The chain runs to 959 residues: Outer capsid protein VP2 (959 aa).

Belongs to the orbivirus VP2 family.

The protein localises to the virion. Functionally, the VP2 protein is one of the two proteins (with VP5) which constitute the virus particle outer capsid. It is the major target of the host immunogenic response. Responsible for viral attachment to target host cell, probably by binding to sialic acid. This attachment induces virion internalization predominantly through clathrin-dependent endocytosis. The polypeptide is Outer capsid protein VP2 (Segment-2) (Antilocapra americana (Pronghorn)).